Here is a 607-residue protein sequence, read N- to C-terminus: DNA mismatch repair protein MutL (607 aa).

The protein belongs to the DNA mismatch repair MutL/HexB family.

This protein is involved in the repair of mismatches in DNA. It is required for dam-dependent methyl-directed DNA mismatch repair. May act as a 'molecular matchmaker', a protein that promotes the formation of a stable complex between two or more DNA-binding proteins in an ATP-dependent manner without itself being part of a final effector complex. This chain is DNA mismatch repair protein MutL, found in Gemmatimonas aurantiaca (strain DSM 14586 / JCM 11422 / NBRC 100505 / T-27).